Consider the following 571-residue polypeptide: Cytosolic Fe-S cluster assembly factor NAR1 (571 aa).

Cys20, Cys62, Cys65, Cys68, Cys204, and Cys259 together coordinate [4Fe-4S] cluster. Residues 415–437 (AKPSRMPGGKPIGSARRPNGKAS) are disordered. Positions 449 and 453 each coordinate [4Fe-4S] cluster.

It belongs to the NARF family.

In terms of biological role, component of the cytosolic Fe/S protein assembly machinery. Required for maturation of extramitochondrial Fe/S proteins. May play a role in the transfer of pre-assembled Fe/S clusters to target apoproteins. The chain is Cytosolic Fe-S cluster assembly factor NAR1 (NAR1) from Sclerotinia sclerotiorum (strain ATCC 18683 / 1980 / Ss-1) (White mold).